The sequence spans 25 residues: Ocellatin-F1 (25 aa).

L25 is modified (leucine amide).

This sequence belongs to the frog skin active peptide (FSAP) family. Ocellatin subfamily. In terms of tissue distribution, expressed by the skin glands.

It localises to the secreted. Its function is as follows. Antibacterial peptide that inhibits reference strains of both Gram-negative bacteria (E.coli, P.aeruginosa, E.cloacae, K.pneumoniae, and A.actinomycetemcomitans) and Gram-positive bacteria (S.aureus) with relatively low potencies (MIC=25-400 uM). Shows antifungal activity against C.lusitaniae (MIC=50.25 uM), but no activity against C.albicans. In the presence of an alkaloid (bufotenine), inhibits cellular infection by the rabies virus. The peptide shows very low hemolytic activity against rabbit erythrocytes. The low amphipathicity of alpha-helices demonstrated by wheel projection as well as the low cationicity may explain the low antibacterial and hemolytic potencies. The polypeptide is Ocellatin-F1 (Leptodactylus labyrinthicus (Labyrinth frog)).